A 453-amino-acid polypeptide reads, in one-letter code: Bifunctional protein GlmU (453 aa).

The segment at 1–225 (MNIVILAAGT…EWETLGVNSK (225 aa)) is pyrophosphorylase. Residues 6–9 (LAAG), K20, Q71, 76–77 (GT), 98–100 (YGD), G135, E150, N165, and N223 contribute to the UDP-N-acetyl-alpha-D-glucosamine site. A Mg(2+)-binding site is contributed by D100. N223 is a Mg(2+) binding site. Residues 226–246 (AQLAELERIHQRNVADALLVD) are linker. Residues 247-453 (GVTLADPARV…GYVRPVKKKS (207 aa)) are N-acetyltransferase. The UDP-N-acetyl-alpha-D-glucosamine site is built by R329 and K347. Residue H359 is the Proton acceptor of the active site. Residues Y362 and N373 each coordinate UDP-N-acetyl-alpha-D-glucosamine. Residues A376, 382-383 (NY), S401, and A419 each bind acetyl-CoA.

The protein in the N-terminal section; belongs to the N-acetylglucosamine-1-phosphate uridyltransferase family. It in the C-terminal section; belongs to the transferase hexapeptide repeat family. In terms of assembly, homotrimer. Mg(2+) is required as a cofactor.

The protein resides in the cytoplasm. It catalyses the reaction alpha-D-glucosamine 1-phosphate + acetyl-CoA = N-acetyl-alpha-D-glucosamine 1-phosphate + CoA + H(+). The catalysed reaction is N-acetyl-alpha-D-glucosamine 1-phosphate + UTP + H(+) = UDP-N-acetyl-alpha-D-glucosamine + diphosphate. It functions in the pathway nucleotide-sugar biosynthesis; UDP-N-acetyl-alpha-D-glucosamine biosynthesis; N-acetyl-alpha-D-glucosamine 1-phosphate from alpha-D-glucosamine 6-phosphate (route II): step 2/2. It participates in nucleotide-sugar biosynthesis; UDP-N-acetyl-alpha-D-glucosamine biosynthesis; UDP-N-acetyl-alpha-D-glucosamine from N-acetyl-alpha-D-glucosamine 1-phosphate: step 1/1. The protein operates within bacterial outer membrane biogenesis; LPS lipid A biosynthesis. Functionally, catalyzes the last two sequential reactions in the de novo biosynthetic pathway for UDP-N-acetylglucosamine (UDP-GlcNAc). The C-terminal domain catalyzes the transfer of acetyl group from acetyl coenzyme A to glucosamine-1-phosphate (GlcN-1-P) to produce N-acetylglucosamine-1-phosphate (GlcNAc-1-P), which is converted into UDP-GlcNAc by the transfer of uridine 5-monophosphate (from uridine 5-triphosphate), a reaction catalyzed by the N-terminal domain. In Burkholderia ambifaria (strain ATCC BAA-244 / DSM 16087 / CCUG 44356 / LMG 19182 / AMMD) (Burkholderia cepacia (strain AMMD)), this protein is Bifunctional protein GlmU.